The following is a 180-amino-acid chain: ATP-dependent protease subunit HslV (180 aa).

Residue Thr5 is part of the active site. Gly165, Cys168, and Thr171 together coordinate Na(+).

Belongs to the peptidase T1B family. HslV subfamily. A double ring-shaped homohexamer of HslV is capped on each side by a ring-shaped HslU homohexamer. The assembly of the HslU/HslV complex is dependent on binding of ATP.

Its subcellular location is the cytoplasm. It carries out the reaction ATP-dependent cleavage of peptide bonds with broad specificity.. Allosterically activated by HslU binding. Functionally, protease subunit of a proteasome-like degradation complex believed to be a general protein degrading machinery. This is ATP-dependent protease subunit HslV from Helicobacter acinonychis (strain Sheeba).